The sequence spans 1018 residues: Pleckstrin homology domain-containing family M member 2 (1018 aa).

Methionine 1 is subject to N-acetylmethionine. The tract at residues methionine 1 to leucine 289 is interaction with KIF5B. Residues arginine 36 to proline 158 enclose the RUN domain. 5 disordered regions span residues serine 210–leucine 367, threonine 407–leucine 440, glutamate 452–leucine 520, glutamate 526–threonine 545, and aspartate 555–serine 583. Low complexity predominate over residues serine 230–proline 245. Residues glutamate 258–threonine 270 show a composition bias toward polar residues. The segment covering valine 294–threonine 306 has biased composition (basic residues). Composition is skewed to polar residues over residues histidine 316–glycine 325 and valine 347–leucine 367. Serine 423 bears the Phosphoserine mark. One can recognise a PH domain in the interval threonine 770–serine 872.

Interacts with KLC2 (via TPR repeats). Interacts with KIF5B. Interacts with BORCS5. Interacts (via RUN domain) with ARL8B (GTP-bound form); PLEKHM1 and PLEKHM2 compete for interaction with ARL8B. Interacts with ARL8A.

The protein resides in the cytoplasm. Its subcellular location is the lysosome membrane. In terms of biological role, plays a role in lysosomes movement and localization at the cell periphery acting as an effector of ARL8B. Required for ARL8B to exert its effects on lysosome location, recruits kinesin-1 to lysosomes and hence direct their movement toward microtubule plus ends. Binding to ARL8B provides a link from lysosomal membranes to plus-end-directed motility. Critical factor involved in NK cell-mediated cytotoxicity. Drives the polarization of cytolytic granules and microtubule-organizing centers (MTOCs) toward the immune synapse between effector NK lymphocytes and target cells. Required for maintenance of the Golgi apparatus organization. May play a role in membrane tubulation. This Mus musculus (Mouse) protein is Pleckstrin homology domain-containing family M member 2.